Reading from the N-terminus, the 155-residue chain is 3-hydroxyacyl-[acyl-carrier-protein] dehydratase FabZ (155 aa).

His59 is a catalytic residue.

Belongs to the thioester dehydratase family. FabZ subfamily.

The protein resides in the cytoplasm. It catalyses the reaction a (3R)-hydroxyacyl-[ACP] = a (2E)-enoyl-[ACP] + H2O. Its function is as follows. Involved in unsaturated fatty acids biosynthesis. Catalyzes the dehydration of short chain beta-hydroxyacyl-ACPs and long chain saturated and unsaturated beta-hydroxyacyl-ACPs. The polypeptide is 3-hydroxyacyl-[acyl-carrier-protein] dehydratase FabZ (Bartonella henselae (strain ATCC 49882 / DSM 28221 / CCUG 30454 / Houston 1) (Rochalimaea henselae)).